Consider the following 1292-residue polypeptide: DNA-directed RNA polymerase subunit beta' (1292 aa).

Zn(2+) contacts are provided by Cys70, Cys72, Cys85, and Cys88. Mg(2+)-binding residues include Asp532, Asp534, and Asp536. The Zn(2+) site is built by Cys911, Cys987, Cys994, and Cys997.

The protein belongs to the RNA polymerase beta' chain family. The RNAP catalytic core consists of 2 alpha, 1 beta, 1 beta' and 1 omega subunit. When a sigma factor is associated with the core the holoenzyme is formed, which can initiate transcription. It depends on Mg(2+) as a cofactor. The cofactor is Zn(2+).

The catalysed reaction is RNA(n) + a ribonucleoside 5'-triphosphate = RNA(n+1) + diphosphate. Functionally, DNA-dependent RNA polymerase catalyzes the transcription of DNA into RNA using the four ribonucleoside triphosphates as substrates. The polypeptide is DNA-directed RNA polymerase subunit beta' (Mycoplasma genitalium (strain ATCC 33530 / DSM 19775 / NCTC 10195 / G37) (Mycoplasmoides genitalium)).